The primary structure comprises 142 residues: uncharacterized protein (142 aa).

The interval 19 to 54 (IHTTPHPHTPHHTHHTHTTPTPTPHPHTHTPTPERS) is disordered. Over residues 26–35 (HTPHHTHHTH) the composition is skewed to basic residues.

This is an uncharacterized protein from Saccharomyces cerevisiae (strain ATCC 204508 / S288c) (Baker's yeast).